The following is a 453-amino-acid chain: MTQDIVILAAGKGSRMKSAFSKVLHKVGGIAMVRRVLTTASTLPESKLHLVVGHQGEQVEANCQDFSANIVWQNDPQGTGDALRRVAPFLQADGATLTLYGDVPLIRASTLEKMTALSNSNTLVLLTISLDNPTGYGRIVRNEQGKVTAIVEQKDASESQLAIKEVNTGILLAPNNHLQGWLAALTNNNAQGEYYLTDVIAMAARDGVDIVTVNPENEAEVAGVNDRVQLAALERELQNQQAVSLMQNGATLLDPSRIDIRGELTTGHDVIIDVNCIFEGKVVLGTGVEVGPNCHLKNCTIGDNTIIKSNTLIEESQVGEHCDIGPFARLRPGTQLANKAKIGNFVETKKAIIGEGSKVNHLSYIGDTEMGANVNVGAGTITCNYDGVNKHLTQVADNVFIGSNTSLVAPVQVAEGAMIAAGSTITKQVGENQLAFARARQTNKDNWPRPIKK.

Residues 1-227 are pyrophosphorylase; the sequence is MTQDIVILAA…EAEVAGVNDR (227 aa). UDP-N-acetyl-alpha-D-glucosamine is bound by residues 8 to 11, K22, Q73, 78 to 79, 100 to 102, G137, E152, N167, and N225; these read LAAG, GT, and YGD. Residue D102 participates in Mg(2+) binding. N225 serves as a coordination point for Mg(2+). A linker region spans residues 228 to 248; sequence VQLAALERELQNQQAVSLMQN. Residues 249–453 form an N-acetyltransferase region; it reads GATLLDPSRI…KDNWPRPIKK (205 aa). The UDP-N-acetyl-alpha-D-glucosamine site is built by R331 and K349. H361 acts as the Proton acceptor in catalysis. UDP-N-acetyl-alpha-D-glucosamine-binding residues include Y364 and N375. Acetyl-CoA-binding positions include A378, 384-385, S403, A421, and R438; that span reads NY.

The protein in the N-terminal section; belongs to the N-acetylglucosamine-1-phosphate uridyltransferase family. In the C-terminal section; belongs to the transferase hexapeptide repeat family. In terms of assembly, homotrimer. Mg(2+) serves as cofactor.

It is found in the cytoplasm. It carries out the reaction alpha-D-glucosamine 1-phosphate + acetyl-CoA = N-acetyl-alpha-D-glucosamine 1-phosphate + CoA + H(+). It catalyses the reaction N-acetyl-alpha-D-glucosamine 1-phosphate + UTP + H(+) = UDP-N-acetyl-alpha-D-glucosamine + diphosphate. Its pathway is nucleotide-sugar biosynthesis; UDP-N-acetyl-alpha-D-glucosamine biosynthesis; N-acetyl-alpha-D-glucosamine 1-phosphate from alpha-D-glucosamine 6-phosphate (route II): step 2/2. It functions in the pathway nucleotide-sugar biosynthesis; UDP-N-acetyl-alpha-D-glucosamine biosynthesis; UDP-N-acetyl-alpha-D-glucosamine from N-acetyl-alpha-D-glucosamine 1-phosphate: step 1/1. The protein operates within bacterial outer membrane biogenesis; LPS lipid A biosynthesis. In terms of biological role, catalyzes the last two sequential reactions in the de novo biosynthetic pathway for UDP-N-acetylglucosamine (UDP-GlcNAc). The C-terminal domain catalyzes the transfer of acetyl group from acetyl coenzyme A to glucosamine-1-phosphate (GlcN-1-P) to produce N-acetylglucosamine-1-phosphate (GlcNAc-1-P), which is converted into UDP-GlcNAc by the transfer of uridine 5-monophosphate (from uridine 5-triphosphate), a reaction catalyzed by the N-terminal domain. The protein is Bifunctional protein GlmU of Marinomonas sp. (strain MWYL1).